Here is a 188-residue protein sequence, read N- to C-terminus: dCTP deaminase (188 aa).

DCTP contacts are provided by residues Lys111–Arg116, Thr135–Glu137, Gln156, Tyr170, and Gln180. The active-site Proton donor/acceptor is the Glu137.

The protein belongs to the dCTP deaminase family. Homotrimer.

The enzyme catalyses dCTP + H2O + H(+) = dUTP + NH4(+). Its pathway is pyrimidine metabolism; dUMP biosynthesis; dUMP from dCTP (dUTP route): step 1/2. Its function is as follows. Catalyzes the deamination of dCTP to dUTP. This chain is dCTP deaminase, found in Neisseria gonorrhoeae (strain ATCC 700825 / FA 1090).